The following is a 1274-amino-acid chain: DENN domain-containing protein 5B (1274 aa).

Residue serine 2 is modified to N-acetylserine. The uDENN domain occupies 39-244; that stretch reads DELAGENFDQ…EVPLPPPGRS (206 aa). A phosphoserine mark is found at serine 49 and serine 178. A cDENN domain is found at 263-399; it reads ELPLSDYPLR…VDFIQELSEV (137 aa). A dDENN domain is found at 401-581; sequence VQFGIPPEGS…DNKIMSQWEE (181 aa). Positions 772–932 constitute an RUN 1 domain; it reads LEENTLIASL…DYFCFTSVFT (161 aa). Phosphoserine is present on serine 822. The helical transmembrane segment at 916–936 threads the bilayer; it reads LLSLNAVDYFCFTSVFTTIMI. A PLAT domain is found at 936–1044; it reads IPYRSVIIPI…DDGSLERILI (109 aa). The residue at position 1062 (threonine 1062) is a Phosphothreonine. Residues serine 1068, serine 1076, and serine 1079 each carry the phosphoserine modification. Residues 1118–1267 enclose the RUN 2 domain; the sequence is TVLLCGENGL…QDFTIVLEGS (150 aa).

The protein belongs to the RAB6IP1 family.

The protein resides in the membrane. In terms of biological role, guanine nucleotide exchange factor (GEF) which may activate RAB39A and/or RAB39B. Promotes the exchange of GDP to GTP, converting inactive GDP-bound Rab proteins into their active GTP-bound form. The protein is DENN domain-containing protein 5B (DENND5B) of Homo sapiens (Human).